Here is a 481-residue protein sequence, read N- to C-terminus: Sphingosine kinase 2 (481 aa).

One can recognise a DAGKc domain in the interval 111 to 253 (GRPKRLLVFV…VDVATIAQGN (143 aa)). Residues 121–123 (NPF) and T153 contribute to the ATP site. 178–181 (SGDG) is a binding site for substrate. D180 serves as the catalytic Proton donor/acceptor. Residues E185 and 210–212 (GTG) each bind ATP. Position 271 (D271) interacts with substrate. Residues R278, R284, and 441–443 (DGE) contribute to the ATP site.

It depends on Mg(2+) as a cofactor. In terms of tissue distribution, highly expressed in flowers and siliques and at lower levels in roots, leaves and stems.

It is found in the vacuole membrane. It catalyses the reaction a sphingoid base + ATP = a sphingoid 1-phosphate + ADP + H(+). With respect to regulation, activated by phosphatidic acid (PA). Binding with PA stimulates the activity by promoting the binding of substrate to the catalytic site. Its function is as follows. Involved in the production of sphingolipid metabolites. Phosphorylates sphingosine and various l sphingoid long-chain base (LCB) products, such as phytosphingosine (PHS, 4-hydroxysphinganine), 4-hydroxy-8-sphingenine, 4,8-sphingadienine and D-erythro-dihydrosphingosine, but has a very few activity toward D,L-threo- dihydrosphingosine. Is required for abscisic acid (ABA) signaling that mediates stomatal closure, inhibition of seed germination and root elongation. May function upstream of PLDALPHA1 and phosphatidic acid (PA) in an amplification response to ABA that mediates stomatal closure. The polypeptide is Sphingosine kinase 2 (SPHK2) (Arabidopsis thaliana (Mouse-ear cress)).